The sequence spans 164 residues: Ribonuclease P protein component 2 (164 aa).

The protein belongs to the eukaryotic/archaeal RNase P protein component 2 family. Consists of a catalytic RNA component and at least 4-5 protein subunits.

Its subcellular location is the cytoplasm. It catalyses the reaction Endonucleolytic cleavage of RNA, removing 5'-extranucleotides from tRNA precursor.. Part of ribonuclease P, a protein complex that generates mature tRNA molecules by cleaving their 5'-ends. The polypeptide is Ribonuclease P protein component 2 (Halobacterium salinarum (strain ATCC 29341 / DSM 671 / R1)).